A 1039-amino-acid chain; its full sequence is Integrin alpha-IIb (1039 aa).

Residues 1-31 (MARALCPLQALWLLEWVLLLLGPCAAPPAWA) form the signal peptide. The Extracellular portion of the chain corresponds to 32–993 (LNLDPVQLTF…TQLLRALEER (962 aa)). FG-GAP repeat units lie at residues 35–96 (DPVQ…GGQC), 110–173 (VGSQ…RRAE), 187–238 (VEND…FSSY), 251–305 (SLSF…DSYY), 306–371 (QRLH…PHAL), 373–432 (APSL…GLRS), and 435–496 (SQVL…VQDS). N-linked (GlcNAc...) asparagine glycosylation is present at Asn-46. Cystine bridges form between Cys-87/Cys-96, Cys-138/Cys-161, and Cys-177/Cys-198. The Ca(2+) site is built by Glu-274, Asp-276, and Asp-278. Asn-280 carries N-linked (GlcNAc...) asparagine glycosylation. Ca(2+)-binding residues include Thr-281, Glu-283, Asp-328, Asn-330, Asp-332, Arg-334, Asp-336, Asp-396, Asp-398, Asp-400, Tyr-402, Asp-404, Asp-457, Asp-459, Asn-461, Tyr-463, and Asp-465. 2 disulfides stabilise this stretch: Cys-504-Cys-515 and Cys-521-Cys-576. A glycan (N-linked (GlcNAc...) asparagine) is linked at Asn-601. Intrachain disulfides connect Cys-633/Cys-639, Cys-705/Cys-718, Cys-857/Cys-921, and Cys-911/Cys-916. Asn-711 carries an N-linked (GlcNAc...) asparagine glycan. The O-linked (GalNAc...) serine; in variant S-874 glycan is linked to Ile-874. O-linked (GalNAc...) serine glycosylation occurs at Ser-878. A Pyrrolidone carboxylic acid; in light chain form 1 modification is found at Gln-891. The N-linked (GlcNAc...) asparagine glycan is linked to Asn-962. A helical transmembrane segment spans residues 994-1019 (AIPIWWVLVGVLGGLLLLTILVLAMW). Residues 1020-1039 (KVGFFKRNRPPLEEDDEEGE) are Cytoplasmic-facing. The GFFKR motif motif lies at 1022–1026 (GFFKR).

The protein belongs to the integrin alpha chain family. As to quaternary structure, heterodimer of an alpha and a beta subunit. The alpha subunit is composed of a heavy and a light chain linked by a disulfide bond. Alpha-IIb associates with beta-3. Directly interacts with RNF181. Interacts (via C-terminus cytoplasmic tail region) with CIB1; the interaction is direct and calcium-dependent. Interacts (via C-terminus cytoplasmic tail region) with CIB2, CIB3 and CIB4; the interactions are stabilized/increased in a calcium and magnesium-dependent manner. ITGA2B:ITGB3 interacts with PPIA/CYPA; the interaction is ROS and PPIase activity-dependent and is increased in the presence of thrombin. ITGA2B:ITGB3 interacts with SELP (via C-type lectin domain); the interaction mediates cell-cell interaction and adhesion. In terms of processing, cleaved by ELANE; the cleavage promotes activation of platelet fibrinogen receptor integrin alpha-IIb/beta-3. Isoform 1 and isoform 2 are expressed in platelets and megakaryocytes, but not in reticulocytes. Not detected in Jurkat, nor in U937 cell lines. Isoform 3 is expressed in prostate adenocarcinoma, as well as in several erythroleukemia, prostate adenocarcinoma and melanoma cell lines, including PC-3, DU-145, HEL, WM983A, WM983B and WM35. Not detected in platelets, nor in normal prostate (at protein level).

It is found in the membrane. Its function is as follows. Integrin alpha-IIb/beta-3 is a receptor for fibronectin, fibrinogen, plasminogen, prothrombin, thrombospondin and vitronectin. It recognizes the sequence R-G-D in a wide array of ligands. It recognizes the sequence H-H-L-G-G-G-A-K-Q-A-G-D-V in fibrinogen gamma chain. Following activation integrin alpha-IIb/beta-3 brings about platelet/platelet interaction through binding of soluble fibrinogen. This step leads to rapid platelet aggregation which physically plugs ruptured endothelial cell surface. In Homo sapiens (Human), this protein is Integrin alpha-IIb (ITGA2B).